The sequence spans 404 residues: tRNA (carboxymethyluridine(34)-5-O)-methyltransferase (404 aa).

Serine 238 is subject to Phosphoserine.

Interacts with TRM112A and TRM112B.

The enzyme catalyses 5-(carboxymethyl)uridine(34) in tRNA + S-adenosyl-L-methionine = 5-(2-methoxy-2-oxoethyl)uridine(34) in tRNA + S-adenosyl-L-homocysteine. Its function is as follows. Catalyzes the methylation of 5-carboxymethyl uridine to 5-methylcarboxymethyl uridine at the wobble position of the anticodon loop in tRNA via its methyltransferase domain. Catalyzes the last step in the formation of 5-methylcarboxymethyl uridine at the wobble position of the anticodon loop in target tRNA. This Arabidopsis thaliana (Mouse-ear cress) protein is tRNA (carboxymethyluridine(34)-5-O)-methyltransferase.